The sequence spans 85 residues: Large ribosomal subunit protein bL27 (85 aa).

Residues 1 to 22 (MAHKKGQGSSRNGRDSPGQHRG) form a disordered region.

Belongs to the bacterial ribosomal protein bL27 family.

This Anaeromyxobacter sp. (strain Fw109-5) protein is Large ribosomal subunit protein bL27.